The sequence spans 972 residues: Multiple C2 domain and transmembrane region protein 8 (972 aa).

Residues 1-107 (MMSNLKLGVE…PYSEAVGLPY (107 aa)) enclose the C2 1 domain. Residues 142 to 203 (PNLISTKKIP…MMESSLYQAP (62 aa)) form a disordered region. The segment covering 150 to 159 (IPSKSRHKFH) has biased composition (basic residues). Residues 161–173 (IPTNESNHSPRGN) show a composition bias toward polar residues. The segment covering 179-194 (PQPPPPQSQTALPPPM) has biased composition (pro residues). C2 domains follow at residues 232-352 (GGGK…PEWY), 384-507 (ALNA…NRWF), and 543-669 (YSSD…SHSY). 5 residues coordinate Ca(2+): aspartate 265, aspartate 271, aspartate 318, aspartate 320, and aspartate 325. 2 consecutive transmembrane segments (helical) span residues 803 to 823 (IIFLVLVCSPEMILPVMSLCL) and 924 to 944 (TVVLYVVPFKVFVLLAGLYIM).

It belongs to the MCTP family. Requires Ca(2+) as cofactor. Expressed in root hairs.

It is found in the membrane. It localises to the vesicle. In terms of biological role, may function as a signaling molecule by regulating the trafficking of other regulators. The protein is Multiple C2 domain and transmembrane region protein 8 of Arabidopsis thaliana (Mouse-ear cress).